A 137-amino-acid chain; its full sequence is Large ribosomal subunit protein uL16 (137 aa).

This sequence belongs to the universal ribosomal protein uL16 family. As to quaternary structure, part of the 50S ribosomal subunit.

Binds 23S rRNA and is also seen to make contacts with the A and possibly P site tRNAs. This is Large ribosomal subunit protein uL16 from Spiroplasma kunkelii.